A 490-amino-acid chain; its full sequence is Betaine aldehyde dehydrogenase (490 aa).

K(+)-binding residues include S26, I27, and D93. 150 to 152 (GAW) is an NAD(+) binding site. K162 serves as the catalytic Charge relay system. Position 176–179 (176–179 (KPSE)) interacts with NAD(+). V180 is a binding site for K(+). 230-233 (GTVT) is a binding site for NAD(+). Position 246 (L246) interacts with K(+). Residue E252 is the Proton acceptor of the active site. 3 residues coordinate NAD(+): G254, C286, and E387. C286 (nucleophile) is an active-site residue. Position 286 is a cysteine sulfenic acid (-SOH) (C286). The K(+) site is built by K457 and G460. E464 serves as the catalytic Charge relay system.

Belongs to the aldehyde dehydrogenase family. Dimer of dimers. It depends on K(+) as a cofactor.

The enzyme catalyses betaine aldehyde + NAD(+) + H2O = glycine betaine + NADH + 2 H(+). Its pathway is amine and polyamine biosynthesis; betaine biosynthesis via choline pathway; betaine from betaine aldehyde: step 1/1. Involved in the biosynthesis of the osmoprotectant glycine betaine. Catalyzes the irreversible oxidation of betaine aldehyde to the corresponding acid. This is Betaine aldehyde dehydrogenase from Ectopseudomonas mendocina (strain ymp) (Pseudomonas mendocina).